The primary structure comprises 202 residues: Glycerol-3-phosphate acyltransferase (202 aa).

4 helical membrane-spanning segments follow: residues 11-31 (ALIA…GLIL), 87-107 (PALA…WLGF), 116-136 (FIGV…AIWL), and 158-178 (VILW…LAAL).

This sequence belongs to the PlsY family. In terms of assembly, probably interacts with PlsX.

The protein resides in the cell inner membrane. It carries out the reaction an acyl phosphate + sn-glycerol 3-phosphate = a 1-acyl-sn-glycero-3-phosphate + phosphate. It functions in the pathway lipid metabolism; phospholipid metabolism. Its function is as follows. Catalyzes the transfer of an acyl group from acyl-phosphate (acyl-PO(4)) to glycerol-3-phosphate (G3P) to form lysophosphatidic acid (LPA). This enzyme utilizes acyl-phosphate as fatty acyl donor, but not acyl-CoA or acyl-ACP. This is Glycerol-3-phosphate acyltransferase from Methylorubrum populi (strain ATCC BAA-705 / NCIMB 13946 / BJ001) (Methylobacterium populi).